A 237-amino-acid polypeptide reads, in one-letter code: Ribonuclease PH (237 aa).

Phosphate contacts are provided by residues arginine 86 and 124–126; that span reads GTR.

This sequence belongs to the RNase PH family. In terms of assembly, homohexameric ring arranged as a trimer of dimers.

The catalysed reaction is tRNA(n+1) + phosphate = tRNA(n) + a ribonucleoside 5'-diphosphate. Functionally, phosphorolytic 3'-5' exoribonuclease that plays an important role in tRNA 3'-end maturation. Removes nucleotide residues following the 3'-CCA terminus of tRNAs; can also add nucleotides to the ends of RNA molecules by using nucleoside diphosphates as substrates, but this may not be physiologically important. Probably plays a role in initiation of 16S rRNA degradation (leading to ribosome degradation) during starvation. In Methylocella silvestris (strain DSM 15510 / CIP 108128 / LMG 27833 / NCIMB 13906 / BL2), this protein is Ribonuclease PH.